The chain runs to 228 residues: UPF0502 protein AZOSEA09860 (228 aa).

It belongs to the UPF0502 family.

This is UPF0502 protein AZOSEA09860 from Aromatoleum aromaticum (strain DSM 19018 / LMG 30748 / EbN1) (Azoarcus sp. (strain EbN1)).